Here is a 181-residue protein sequence, read N- to C-terminus: PLAT domain-containing protein 1 (181 aa).

An N-terminal signal peptide occupies residues 1-14 (MARRDVLLPFLLLL). Residue Ala15 is modified to N-acetylalanine. The PLAT domain occupies 29 to 156 (CVYTFYLRTG…SPYELTAVRN (128 aa)).

In terms of tissue distribution, expressed in root tips, pericycle cells, lateral root primordia, stomata, leaf vasculature, hydathodes and floral organs.

It is found in the endoplasmic reticulum. The protein localises to the plastid. It localises to the chloroplast. The protein resides in the plastoglobule. Functionally, positive regulator of abiotic stress tolerance involved in the regulation of plant growth. May be a downstream target of the abscisic acid (ABA) signaling pathway. In Arabidopsis thaliana (Mouse-ear cress), this protein is PLAT domain-containing protein 1.